We begin with the raw amino-acid sequence, 98 residues long: UPF0251 protein Sputcn32_0687 (98 aa).

This sequence belongs to the UPF0251 family.

The protein is UPF0251 protein Sputcn32_0687 of Shewanella putrefaciens (strain CN-32 / ATCC BAA-453).